The following is a 190-amino-acid chain: Major sperm protein 32 (190 aa).

Positions 72-189 constitute an MSP domain; that stretch reads MIQTQPGTKI…RRKNLPIEYN (118 aa).

In terms of tissue distribution, sperm.

The protein resides in the cell projection. It localises to the pseudopodium. It is found in the cytoplasm. The protein localises to the cytoskeleton. Its function is as follows. Central component in molecular interactions underlying sperm crawling. Forms an extensive filament system that extends from sperm villipoda, along the leading edge of the pseudopod. The sequence is that of Major sperm protein 32 (msp-32) from Caenorhabditis elegans.